The chain runs to 158 residues: Transcription elongation factor GreA (158 aa).

It belongs to the GreA/GreB family.

Necessary for efficient RNA polymerase transcription elongation past template-encoded arresting sites. The arresting sites in DNA have the property of trapping a certain fraction of elongating RNA polymerases that pass through, resulting in locked ternary complexes. Cleavage of the nascent transcript by cleavage factors such as GreA or GreB allows the resumption of elongation from the new 3'terminus. GreA releases sequences of 2 to 3 nucleotides. The chain is Transcription elongation factor GreA from Yersinia pestis.